The following is a 102-amino-acid chain: Small ribosomal subunit protein uS10 (102 aa).

It belongs to the universal ribosomal protein uS10 family. As to quaternary structure, part of the 30S ribosomal subunit.

Involved in the binding of tRNA to the ribosomes. The polypeptide is Small ribosomal subunit protein uS10 (Methanococcus maripaludis (strain C5 / ATCC BAA-1333)).